The chain runs to 341 residues: UDP-3-O-(3-hydroxymyristoyl)glucosamine N-acyltransferase (341 aa).

His239 serves as the catalytic Proton acceptor.

This sequence belongs to the transferase hexapeptide repeat family. LpxD subfamily. Homotrimer.

The catalysed reaction is a UDP-3-O-[(3R)-3-hydroxyacyl]-alpha-D-glucosamine + a (3R)-hydroxyacyl-[ACP] = a UDP-2-N,3-O-bis[(3R)-3-hydroxyacyl]-alpha-D-glucosamine + holo-[ACP] + H(+). It catalyses the reaction UDP-3-O-[(3R)-3-hydroxytetradecanoyl]-alpha-D-glucosamine + (3R)-hydroxytetradecanoyl-[ACP] = UDP-2-N,3-O-bis[(3R)-3-hydroxytetradecanoyl]-alpha-D-glucosamine + holo-[ACP] + H(+). Its pathway is glycolipid biosynthesis; lipid IV(A) biosynthesis; lipid IV(A) from (3R)-3-hydroxytetradecanoyl-[acyl-carrier-protein] and UDP-N-acetyl-alpha-D-glucosamine: step 3/6. Catalyzes the N-acylation of UDP-3-O-(hydroxytetradecanoyl)glucosamine using 3-hydroxytetradecanoyl-ACP as the acyl donor. Is involved in the biosynthesis of lipid A, a phosphorylated glycolipid that anchors the lipopolysaccharide to the outer membrane of the cell. This chain is UDP-3-O-(3-hydroxymyristoyl)glucosamine N-acyltransferase, found in Escherichia coli O157:H7.